A 642-amino-acid polypeptide reads, in one-letter code: 1-deoxy-D-xylulose-5-phosphate synthase 2 (642 aa).

Thiamine diphosphate is bound by residues H79 and 120-122 (AHS). Residue D155 participates in Mg(2+) binding. Residues 156-157 (GS), N184, Y293, and E375 each bind thiamine diphosphate. A Mg(2+)-binding site is contributed by N184.

Belongs to the transketolase family. DXPS subfamily. As to quaternary structure, homodimer. Mg(2+) is required as a cofactor. Thiamine diphosphate serves as cofactor.

It catalyses the reaction D-glyceraldehyde 3-phosphate + pyruvate + H(+) = 1-deoxy-D-xylulose 5-phosphate + CO2. Its pathway is metabolic intermediate biosynthesis; 1-deoxy-D-xylulose 5-phosphate biosynthesis; 1-deoxy-D-xylulose 5-phosphate from D-glyceraldehyde 3-phosphate and pyruvate: step 1/1. Catalyzes the acyloin condensation reaction between C atoms 2 and 3 of pyruvate and glyceraldehyde 3-phosphate to yield 1-deoxy-D-xylulose-5-phosphate (DXP). This is 1-deoxy-D-xylulose-5-phosphate synthase 2 from Roseobacter denitrificans (strain ATCC 33942 / OCh 114) (Erythrobacter sp. (strain OCh 114)).